The primary structure comprises 476 residues: Cysteine--tRNA ligase (476 aa).

Cys36 provides a ligand contact to Zn(2+). Residues 38–48 (PTVYDYAHIGN) carry the 'HIGH' region motif. The Zn(2+) site is built by Cys221, His246, and Glu250. Residues 278-282 (KMSKS) carry the 'KMSKS' region motif. An ATP-binding site is contributed by Lys281.

This sequence belongs to the class-I aminoacyl-tRNA synthetase family. Monomer. It depends on Zn(2+) as a cofactor.

The protein localises to the cytoplasm. The enzyme catalyses tRNA(Cys) + L-cysteine + ATP = L-cysteinyl-tRNA(Cys) + AMP + diphosphate. The polypeptide is Cysteine--tRNA ligase (Chlamydia felis (strain Fe/C-56) (Chlamydophila felis)).